Consider the following 721-residue polypeptide: Fatty acid oxidation complex subunit alpha (721 aa).

The enoyl-CoA hydratase/isomerase stretch occupies residues 1–190 (MIYEGKAITV…KVGVVDAIVA (190 aa)). Asp297 lines the substrate pocket. Residues 312-721 (RDVKQAAVLG…SFFGQASSEV (410 aa)) are 3-hydroxyacyl-CoA dehydrogenase. Residues Met325, Asp344, 401–403 (VVE), Lys408, and Ser430 each bind NAD(+). Residue His451 is the For 3-hydroxyacyl-CoA dehydrogenase activity of the active site. Asn454 contacts NAD(+). Residues Asn501 and Tyr660 each contribute to the substrate site.

It in the N-terminal section; belongs to the enoyl-CoA hydratase/isomerase family. In the C-terminal section; belongs to the 3-hydroxyacyl-CoA dehydrogenase family. Heterotetramer of two alpha chains (FadB) and two beta chains (FadA).

It catalyses the reaction a (3S)-3-hydroxyacyl-CoA + NAD(+) = a 3-oxoacyl-CoA + NADH + H(+). It carries out the reaction a (3S)-3-hydroxyacyl-CoA = a (2E)-enoyl-CoA + H2O. The catalysed reaction is a 4-saturated-(3S)-3-hydroxyacyl-CoA = a (3E)-enoyl-CoA + H2O. The enzyme catalyses (3S)-3-hydroxybutanoyl-CoA = (3R)-3-hydroxybutanoyl-CoA. It catalyses the reaction a (3Z)-enoyl-CoA = a 4-saturated (2E)-enoyl-CoA. It carries out the reaction a (3E)-enoyl-CoA = a 4-saturated (2E)-enoyl-CoA. It functions in the pathway lipid metabolism; fatty acid beta-oxidation. Its function is as follows. Involved in the aerobic and anaerobic degradation of long-chain fatty acids via beta-oxidation cycle. Catalyzes the formation of 3-oxoacyl-CoA from enoyl-CoA via L-3-hydroxyacyl-CoA. It can also use D-3-hydroxyacyl-CoA and cis-3-enoyl-CoA as substrate. The protein is Fatty acid oxidation complex subunit alpha of Pseudomonas syringae pv. tomato (strain ATCC BAA-871 / DC3000).